The sequence spans 207 residues: MALHTVLIILSLLPMLEAQNPEHANFTIGEPITNETLSWLSDKWFFMGAAFRKLEYRQAIQTMQSEFFYLTTNLINDTIELRESQTIGDQCVYNSTHLGFQRENGTFSKYEGGVETFAHLIVLRKHGAFMLAFDLKDEKKRGLSLYAKRPDITPELREVFQKAVTHVGMDESEIIFVDWKKDRCGQQEKKQLELGKETKKDPEEGQA.

Positions Met-1–Ala-18 are cleaved as a signal peptide. Gln-19 bears the Pyrrolidone carboxylic acid mark. N-linked (GlcNAc...) asparagine glycans are attached at residues Asn-25, Asn-34, Asn-76, Asn-94, and Asn-104. Cys-91 and Cys-184 are disulfide-bonded.

Belongs to the calycin superfamily. Lipocalin family.

Its subcellular location is the secreted. Functionally, functions as a transport protein in the blood stream. Binds various ligands in the interior of its beta-barrel domain. Appears to function in modulating the activity of the immune system during the acute-phase reaction. The polypeptide is Alpha-1-acid glycoprotein 1 (Orm1) (Mus musculus (Mouse)).